Reading from the N-terminus, the 422-residue chain is Enolase (422 aa).

Gln161 lines the (2R)-2-phosphoglycerate pocket. Glu203 (proton donor) is an active-site residue. Mg(2+) is bound by residues Asp240, Glu283, and Asp310. Residues Lys335, Arg364, Ser365, and Lys386 each coordinate (2R)-2-phosphoglycerate. The active-site Proton acceptor is Lys335.

Belongs to the enolase family. It depends on Mg(2+) as a cofactor.

The protein localises to the cytoplasm. The protein resides in the secreted. It is found in the cell surface. It carries out the reaction (2R)-2-phosphoglycerate = phosphoenolpyruvate + H2O. Its pathway is carbohydrate degradation; glycolysis; pyruvate from D-glyceraldehyde 3-phosphate: step 4/5. Its function is as follows. Catalyzes the reversible conversion of 2-phosphoglycerate (2-PG) into phosphoenolpyruvate (PEP). It is essential for the degradation of carbohydrates via glycolysis. The sequence is that of Enolase from Deinococcus geothermalis (strain DSM 11300 / CIP 105573 / AG-3a).